Here is a 445-residue protein sequence, read N- to C-terminus: MKIKVISRSEEEETKEKASDVRKLHRNLDPNLHPFERPREYVRALNATKLDRVFAKPFIGSLSGHTDGIFTMTRHPTLLNNVASGSCDGVIKLWNLTSLTERTTVQAHNGFVRGLVFTPDGKHMVSCGEDKTIKMWKLDLPEYTFNQEVISIYNGKNAFTSIDHQLNSTTFATSGPTSVEIWKHQRSTPIQTLQWGHSTITKVKFNPIETHLLASCTTDRDIILYDIRENSPAQKLTTSMRSNSIAWCPTESFTLAIANEDENVYQYDIRNLSKAMTVHRDHVGSVLDIDYSPTGREIVSGSYDKTIRIFPVDSYKSREVYYTNRMQRIFSVLFTADSRFILSGSDDMNIRVWKANSSAPLGILSNREKEKLEYQDKIKEKFKEIPELKTIATHRRVPQLVYKRRFIKNEIHKAKQRRVKNISNNSGKSPKVEKVLSKHTIKVDN.

WD repeat units follow at residues 64–104 (GHTD…ERTT), 107–146 (AHNG…YTFN), 154–192 (NGKN…PIQT), 196–235 (GHST…PAQK), 237–277 (TTSM…KAMT), 281–320 (DHVG…SREV), and 324–363 (NRMQ…PLGI). A disordered region spans residues 417–445 (RRVKNISNNSGKSPKVEKVLSKHTIKVDN). A compositionally biased stretch (basic and acidic residues) spans 430–445 (PKVEKVLSKHTIKVDN).

The protein belongs to the WD repeat DCAF13/WDSOF1 family.

The protein resides in the nucleus. Its subcellular location is the nucleolus. It functions in the pathway protein modification; protein ubiquitination. Possible role in ribosomal RNA processing. May function as a substrate receptor for CUL4-DDB1 E3 ubiquitin-protein ligase complex. This is DDB1- and CUL4-associated factor 13 (wdsof1) from Dictyostelium discoideum (Social amoeba).